The following is a 451-amino-acid chain: Scaffold protein ILK (451 aa).

Position 1 is an N-acetylmethionine (Met1). ANK repeat units lie at residues 2 to 30 (DDIF…LNQG), 31 to 63 (DDHG…INVM), 64 to 96 (NRGD…INAV), 97 to 129 (NEHG…VSIC), and 130 to 174 (NKYG…GTTR). Positions 33–139 (HGFSPLHWAC…NKYGEMPMDK (107 aa)) are interaction with LIMS1. At Thr173 the chain carries Phosphothreonine. The segment at 180-212 (GTLNKHSGIDFKQLNFLAKLNENHSGELWKGRW) is PH-like; mediates interaction with TGFB1I1. Ser186 carries the post-translational modification Phosphoserine. Residues 193 to 445 (LNFLAKLNEN…PKFDMIVPIL (253 aa)) enclose the Protein kinase domain. ATP contacts are provided by Asn200, Asn202, His203, and Ser204. Phosphoserine is present on Ser246. Positions 270, 272, and 279 each coordinate ATP. Asp339 is a Mg(2+) binding site. Lys341 provides a ligand contact to ATP. The Nuclear localization signal signature appears at 363-371 (KKPEDTNRR). Lys425 carries the N6-acetyllysine modification.

This sequence belongs to the protein kinase superfamily. TKL Ser/Thr protein kinase family. Component of the heterotrimeric IPP (ILK-PINCH-PARVIN) complex composed of ILK, LIMS1/PINCH and PARVA; the complex binds to F-actin via the C-terminal tail of LIMS1 and the N-terminal region of PARVA, promoting F-actin filament bundling. Formation of the IPP complex is dependent on protein kinase C and precedes integrin-mediated cell adhesion and spreading. ILK also interacts with LIMS2/PINCH2 and with PARVB and PARVG which may substitute for LIMS1 and PARVA in the IPP complex; PARVA and PARVB compete for the same binding site. Interaction with PARVG promotes the establishment of cell polarity required for leukocyte migration. Interacts with the cytoplasmic domain of integrin ITGB1 and may also interact with integrins ITGB2, ITGB3 and/or ITGB5. Interacts probably also with TGFB1I1. Interacts (via ANK repeats) with EPHA1 (via SAM domain); stimulated by EFNA1 but independent of the kinase activity of EPHA1. Interacts with FERMT2. Interacts with LIMD2; leading to activate the protein kinase activity. Interacts with PXN/PAXILLIN (via LD motif 4). Interacts with CCDC25 (via cytoplasmic region); initiating the ILK-PARVB cascade to induce cytoskeleton rearrangement and directional migration of cells. Interacts with IQGAP1; the interaction is required for localization of IQGAP1 to the cell cortex. Post-translationally, phosphorylation by PAK1 modulates ILK subcellular location by promoting its nuclear export.

The protein resides in the cell junction. The protein localises to the focal adhesion. It localises to the cell membrane. Its subcellular location is the cell projection. It is found in the lamellipodium. The protein resides in the cytoplasm. The protein localises to the myofibril. It localises to the sarcomere. Its subcellular location is the nucleus. It is found in the cytoskeleton. The protein resides in the microtubule organizing center. The protein localises to the centrosome. It localises to the cell cortex. Scaffold protein which mediates protein-protein interactions during a range of cellular events including focal adhesion assembly, cell adhesion and cell migration. Regulates integrin-mediated signal transduction by contributing to inside-out integrin activation. Recruits PARVA and LIMS1/PITCH to form the heterotrimeric IPP (ILK-PINCH-PARVIN) complex which binds to F-actin via the C-terminal tail of LIMS1 and the N-terminal region of PARVA, promoting F-actin filament bundling, a process required to generate force for actin cytoskeleton reorganization and subsequent dynamic cell adhesion events such as cell spreading and migration. Binding to PARVA promotes effective assembly of ILK into focal adhesions while PARVA-bound ILK can simultaneously engage integrin-beta cytoplasmic tails to mediate cell adhesion. Plays a role with PARVG in promoting the cell adhesion and spreading of leukocytes. Acts as an upstream effector of both AKT1/PKB and GSK3. Mediates trafficking of caveolae to the cell surface in an ITGB1-dependent manner by promoting the recruitment of IQGAP1 to the cell cortex which cooperates with its effector DIAPH1 to locally stabilize microtubules and allow stable insertion of caveolae into the plasma membrane. Required for the maintenance of mitotic spindle integrity by promoting phosphorylation of TACC3 by AURKA. Associates with chromatin and may act as a negative regulator of transcription when located in the nucleus. In Cavia porcellus (Guinea pig), this protein is Scaffold protein ILK.